The following is a 331-amino-acid chain: Ferrochelatase (331 aa).

The Fe cation site is built by histidine 187 and glutamate 286.

Belongs to the ferrochelatase family.

The protein resides in the cytoplasm. It catalyses the reaction heme b + 2 H(+) = protoporphyrin IX + Fe(2+). The protein operates within porphyrin-containing compound metabolism; protoheme biosynthesis; protoheme from protoporphyrin-IX: step 1/1. In terms of biological role, catalyzes the ferrous insertion into protoporphyrin IX. In Legionella pneumophila subsp. pneumophila (strain Philadelphia 1 / ATCC 33152 / DSM 7513), this protein is Ferrochelatase.